Consider the following 441-residue polypeptide: MRIFFFAYVLPTVISLLLGCQGAIAALGVDITKGNTEKVKISVAPMHSSTNLEKEIGKSCIRVMLRDLNSTGIFDASWKLPAGGFSTTSEGMPDSNAWTSVAKDVLVTGSIKEFAQGRVKVKLFIWDVASGRQLSGKSFNFATGNWRRAAHSMSDSIYSRITGEGGYFNTRIAYVAETGLPGSRRIAIMDQDGANNIYITGRGEFVSTPRFSPDARNLVYMSYAKSGGSVVLHDLETGYSTALGGVRGVNSSPRFSPDGRHVLLSESAQGSTNIYSIDLKSGKSTRLTNDRSINTSASYSPDKKSIVFNSDRSGRPQLYVMNADGTNQRRISSGKGGYSAPAWSPRGDWIAFTKTEGKSFHVGVMKPDGSGERLLAKGYMVDSPSWSPNGRVILFTQQDPPSATHPFRSRLVTVDITGTNTQILDVPTNASNAHWSPVLRE.

Positions 1–25 (MRIFFFAYVLPTVISLLLGCQGAIA) are cleaved as a signal peptide.

This sequence belongs to the TolB family. The Tol-Pal system is composed of five core proteins: the inner membrane proteins TolA, TolQ and TolR, the periplasmic protein TolB and the outer membrane protein Pal. They form a network linking the inner and outer membranes and the peptidoglycan layer.

The protein localises to the periplasm. In terms of biological role, part of the Tol-Pal system, which plays a role in outer membrane invagination during cell division and is important for maintaining outer membrane integrity. In Anaplasma marginale (strain St. Maries), this protein is Tol-Pal system protein TolB.